Reading from the N-terminus, the 128-residue chain is Ribonuclease pancreatic (128 aa).

The tract at residues 1-25 is disordered; it reads KESSAKKFQRQHIDSSGSPSTNPNY. 2 residues coordinate substrate: K7 and R10. The Proton acceptor role is filled by H12. The segment covering 14 to 25 has biased composition (polar residues); that stretch reads DSSGSPSTNPNY. 4 disulfide bridges follow: C26-C84, C40-C95, C58-C110, and C65-C72. Residue N34 is glycosylated (N-linked (GlcNAc...) asparagine). Residues 41–45, K66, and R85 each bind substrate; that span reads KPVNT. The active-site Proton donor is H119.

Belongs to the pancreatic ribonuclease family. Monomer. Interacts with and forms tight 1:1 complexes with RNH1. Dimerization of two such complexes may occur. Interaction with RNH1 inhibits this protein. In terms of tissue distribution, pancreas.

Its subcellular location is the secreted. It carries out the reaction an [RNA] containing cytidine + H2O = an [RNA]-3'-cytidine-3'-phosphate + a 5'-hydroxy-ribonucleotide-3'-[RNA].. The catalysed reaction is an [RNA] containing uridine + H2O = an [RNA]-3'-uridine-3'-phosphate + a 5'-hydroxy-ribonucleotide-3'-[RNA].. Its function is as follows. Endonuclease that catalyzes the cleavage of RNA on the 3' side of pyrimidine nucleotides. Acts on single-stranded and double-stranded RNA. The chain is Ribonuclease pancreatic (RNASE1) from Proechimys guairae (Guaira spiny rat).